A 159-amino-acid chain; its full sequence is Major latex protein 146 (159 aa).

The protein belongs to the MLP family. As to expression, laticifer.

It localises to the vacuole. The protein resides in the cytoplasmic vesicle. In terms of biological role, not known; MLPs constitute up to 50% of the soluble latex protein. The sequence is that of Major latex protein 146 (MLP146) from Papaver somniferum (Opium poppy).